We begin with the raw amino-acid sequence, 197 residues long: Peptide deformylase (197 aa).

Cys-106 and His-148 together coordinate Fe cation. The active site involves Glu-149. His-152 serves as a coordination point for Fe cation.

Belongs to the polypeptide deformylase family. Requires Fe(2+) as cofactor.

The catalysed reaction is N-terminal N-formyl-L-methionyl-[peptide] + H2O = N-terminal L-methionyl-[peptide] + formate. In terms of biological role, removes the formyl group from the N-terminal Met of newly synthesized proteins. Requires at least a dipeptide for an efficient rate of reaction. N-terminal L-methionine is a prerequisite for activity but the enzyme has broad specificity at other positions. The protein is Peptide deformylase of Mycobacterium marinum (strain ATCC BAA-535 / M).